The following is a 199-amino-acid chain: 7-methyl-GTP pyrophosphatase (199 aa).

The Proton acceptor role is filled by Asp-76.

It belongs to the Maf family. YceF subfamily. Requires a divalent metal cation as cofactor.

The protein localises to the cytoplasm. The enzyme catalyses N(7)-methyl-GTP + H2O = N(7)-methyl-GMP + diphosphate + H(+). Nucleoside triphosphate pyrophosphatase that hydrolyzes 7-methyl-GTP (m(7)GTP). May have a dual role in cell division arrest and in preventing the incorporation of modified nucleotides into cellular nucleic acids. In Mesorhizobium japonicum (strain LMG 29417 / CECT 9101 / MAFF 303099) (Mesorhizobium loti (strain MAFF 303099)), this protein is 7-methyl-GTP pyrophosphatase.